The primary structure comprises 158 residues: NAD(P)H-quinone oxidoreductase subunit N (158 aa).

This sequence belongs to the complex I NdhN subunit family. As to quaternary structure, NDH-1 can be composed of about 15 different subunits; different subcomplexes with different compositions have been identified which probably have different functions.

The protein localises to the cellular thylakoid membrane. It catalyses the reaction a plastoquinone + NADH + (n+1) H(+)(in) = a plastoquinol + NAD(+) + n H(+)(out). It carries out the reaction a plastoquinone + NADPH + (n+1) H(+)(in) = a plastoquinol + NADP(+) + n H(+)(out). Functionally, NDH-1 shuttles electrons from an unknown electron donor, via FMN and iron-sulfur (Fe-S) centers, to quinones in the respiratory and/or the photosynthetic chain. The immediate electron acceptor for the enzyme in this species is believed to be plastoquinone. Couples the redox reaction to proton translocation, and thus conserves the redox energy in a proton gradient. Cyanobacterial NDH-1 also plays a role in inorganic carbon-concentration. This Rippkaea orientalis (strain PCC 8801 / RF-1) (Cyanothece sp. (strain PCC 8801)) protein is NAD(P)H-quinone oxidoreductase subunit N.